We begin with the raw amino-acid sequence, 181 residues long: MICGIDEVGRGCIFGPVLSAAVIFKTKPNFLNELDDSKKLTKTKREYLSSLILENAYYAFADISNEIIDKINIHNASLLAMQIAYQKLNIECNLVLVDGKFIPKIQAKQIRAIIKGDSMIDEIKAASIIAKVQRDKLMVEYDKIYPLYGLKKNKGYPTKEHKDAIKKHGILSLHRKSFRLI.

An RNase H type-2 domain is found at 1–181 (MICGIDEVGR…SLHRKSFRLI (181 aa)). 3 residues coordinate a divalent metal cation: D6, E7, and D98.

This sequence belongs to the RNase HII family. Requires Mn(2+) as cofactor. Mg(2+) is required as a cofactor.

The protein localises to the cytoplasm. It carries out the reaction Endonucleolytic cleavage to 5'-phosphomonoester.. Functionally, endonuclease that specifically degrades the RNA of RNA-DNA hybrids. In Borrelia recurrentis (strain A1), this protein is Ribonuclease HII.